The following is a 100-amino-acid chain: Urease subunit gamma (100 aa).

Belongs to the urease gamma subunit family. In terms of assembly, heterotrimer of UreA (gamma), UreB (beta) and UreC (alpha) subunits. Three heterotrimers associate to form the active enzyme.

It is found in the cytoplasm. The enzyme catalyses urea + 2 H2O + H(+) = hydrogencarbonate + 2 NH4(+). Its pathway is nitrogen metabolism; urea degradation; CO(2) and NH(3) from urea (urease route): step 1/1. The sequence is that of Urease subunit gamma from Synechocystis sp. (strain ATCC 27184 / PCC 6803 / Kazusa).